Consider the following 450-residue polypeptide: Bifunctional protein GlmU (450 aa).

Positions 1–226 (MLAVAVLAAG…PDEVNGINNR (226 aa)) are pyrophosphorylase. Residues 7-10 (LAAG), Lys21, Gln73, and 78-79 (GT) contribute to the UDP-N-acetyl-alpha-D-glucosamine site. Asp103 serves as a coordination point for Mg(2+). The UDP-N-acetyl-alpha-D-glucosamine site is built by Gly140, Glu155, Asn170, and Asn224. A Mg(2+)-binding site is contributed by Asn224. The interval 227–247 (KQLAQCEGVLQQRLRDYWMDE) is linker. Residues 248–450 (GVTFVDPASC…TKDNWANRSI (203 aa)) are N-acetyltransferase. Positions 329 and 347 each coordinate UDP-N-acetyl-alpha-D-glucosamine. Catalysis depends on His359, which acts as the Proton acceptor. Positions 362 and 373 each coordinate UDP-N-acetyl-alpha-D-glucosamine. Residues Ala376, 382 to 383 (NY), Ala419, and Arg436 each bind acetyl-CoA.

This sequence in the N-terminal section; belongs to the N-acetylglucosamine-1-phosphate uridyltransferase family. In the C-terminal section; belongs to the transferase hexapeptide repeat family. As to quaternary structure, homotrimer. Requires Mg(2+) as cofactor.

The protein localises to the cytoplasm. It catalyses the reaction alpha-D-glucosamine 1-phosphate + acetyl-CoA = N-acetyl-alpha-D-glucosamine 1-phosphate + CoA + H(+). The enzyme catalyses N-acetyl-alpha-D-glucosamine 1-phosphate + UTP + H(+) = UDP-N-acetyl-alpha-D-glucosamine + diphosphate. The protein operates within nucleotide-sugar biosynthesis; UDP-N-acetyl-alpha-D-glucosamine biosynthesis; N-acetyl-alpha-D-glucosamine 1-phosphate from alpha-D-glucosamine 6-phosphate (route II): step 2/2. Its pathway is nucleotide-sugar biosynthesis; UDP-N-acetyl-alpha-D-glucosamine biosynthesis; UDP-N-acetyl-alpha-D-glucosamine from N-acetyl-alpha-D-glucosamine 1-phosphate: step 1/1. It functions in the pathway bacterial outer membrane biogenesis; LPS lipid A biosynthesis. Catalyzes the last two sequential reactions in the de novo biosynthetic pathway for UDP-N-acetylglucosamine (UDP-GlcNAc). The C-terminal domain catalyzes the transfer of acetyl group from acetyl coenzyme A to glucosamine-1-phosphate (GlcN-1-P) to produce N-acetylglucosamine-1-phosphate (GlcNAc-1-P), which is converted into UDP-GlcNAc by the transfer of uridine 5-monophosphate (from uridine 5-triphosphate), a reaction catalyzed by the N-terminal domain. This is Bifunctional protein GlmU from Synechococcus sp. (strain CC9902).